The chain runs to 65 residues: Cold shock-like protein CspB (65 aa).

Positions glycine 3–valine 62 constitute a CSD domain.

In terms of assembly, homodimer.

Its subcellular location is the cytoplasm. The sequence is that of Cold shock-like protein CspB (cspB) from Bacillus cereus.